Here is a 159-residue protein sequence, read N- to C-terminus: Vesicle transport protein SFT2B (159 aa).

An N-acetylmethionine modification is found at Met1. The Cytoplasmic segment spans residues 1–36; that stretch reads MDKLKKVLSGQDTEDRSGLSEVVEASSLSWGTRIKG. Ser9 carries the post-translational modification Phosphoserine. The chain crosses the membrane as a helical span at residues 37–57; sequence FIACFALGILCSVLGTLLLWV. Residues 58–63 are Lumenal-facing; sequence PRKGLG. Residues 64–84 form a helical membrane-spanning segment; sequence LFAVFYTLGNIMSIGSTVFLM. Over 85–98 the chain is Cytoplasmic; it reads GPLKQLKRMFEPTR. Residues 99–119 form a helical membrane-spanning segment; sequence LIATILVLLCFALTLCSAFLW. The Lumenal segment spans residues 120–122; the sequence is NKG. The helical transmembrane segment at 123–143 threads the bilayer; sequence LALIFCILQSLALTWYSLSYI. Residues 144–159 lie on the Cytoplasmic side of the membrane; the sequence is PYARDAVKKCFAVCLA.

Belongs to the SFT2 family.

The protein localises to the membrane. Functionally, may be involved in fusion of retrograde transport vesicles derived from an endocytic compartment with the Golgi complex. The sequence is that of Vesicle transport protein SFT2B from Mus musculus (Mouse).